The primary structure comprises 89 residues: 10 kDa fusion protein (89 aa).

Positions 1–29 (MDENDGENLLTQPDDTGNSTNGVYAAGAP) are disordered. The segment covering 9–22 (LLTQPDDTGNSTNG) has biased composition (polar residues). N-linked (GlcNAc...) asparagine; by host glycosylation occurs at Asn18.

Belongs to the poxviruses fusion protein family. Homotrimer, covalently linked.

The protein resides in the virion membrane. In Capra hircus (Goat), this protein is 10 kDa fusion protein.